The chain runs to 154 residues: MAENGGRAGKSSGSGTGKGAVSAEQVIAGFNRLRQEQRGLASKAAELEMELNEHSLVIDTLKEVDETRKCYRMVGGVLVERTVKEVLPALENNKEQIQKIIETLTQQLQAKGKELNEFREKHNIRLMGEDEKPAAKENSEGAGAKASSAGVLVS.

Over residues 1–18 the composition is skewed to gly residues; that stretch reads MAENGGRAGKSSGSGTGK. 2 disordered regions span residues 1–20 and 124–154; these read MAEN…GKGA and IRLM…VLVS. Positions 124–139 are enriched in basic and acidic residues; that stretch reads IRLMGEDEKPAAKENS. Residues 140–154 show a composition bias toward low complexity; that stretch reads EGAGAKASSAGVLVS.

Belongs to the prefoldin subunit beta family. As to quaternary structure, heterohexamer of two PFD-alpha type and four PFD-beta type subunits. Component of the PAQosome complex which is responsible for the biogenesis of several protein complexes and which consists of R2TP complex members RUVBL1, RUVBL2, RPAP3 and PIH1D1, URI complex members PFDN2, PFDN6, PDRG1, UXT and URI1 as well as ASDURF, POLR2E and DNAAF10/WDR92. Interacts with URI1; the interaction is phosphorylation-dependent and occurs in a growth-dependent manner.

The protein resides in the nucleus. Its subcellular location is the cytoplasm. It localises to the mitochondrion. Binds specifically to cytosolic chaperonin (c-CPN) and transfers target proteins to it. Binds to nascent polypeptide chain and promotes folding in an environment in which there are many competing pathways for nonnative proteins. This chain is Prefoldin subunit 2 (PFDN2), found in Bos taurus (Bovine).